The chain runs to 417 residues: Putative nickel insertion protein (417 aa).

A disordered region spans residues 69 to 99; that stretch reads HEHHHDHGHHHHGHGHHHDHTHDHHHHHEHR. Residues 74 to 99 are compositionally biased toward basic residues; that stretch reads DHGHHHHGHGHHHDHTHDHHHHHEHR.

The protein belongs to the LarC family.

The sequence is that of Putative nickel insertion protein from Maridesulfovibrio salexigens (strain ATCC 14822 / DSM 2638 / NCIMB 8403 / VKM B-1763) (Desulfovibrio salexigens).